A 417-amino-acid polypeptide reads, in one-letter code: Serine hydroxymethyltransferase (417 aa).

(6S)-5,6,7,8-tetrahydrofolate is bound by residues Leu-121 and 125–127 (GHL). N6-(pyridoxal phosphate)lysine is present on Lys-229. 355 to 357 (SPF) provides a ligand contact to (6S)-5,6,7,8-tetrahydrofolate.

This sequence belongs to the SHMT family. In terms of assembly, homodimer. It depends on pyridoxal 5'-phosphate as a cofactor.

It is found in the cytoplasm. The enzyme catalyses (6R)-5,10-methylene-5,6,7,8-tetrahydrofolate + glycine + H2O = (6S)-5,6,7,8-tetrahydrofolate + L-serine. It participates in one-carbon metabolism; tetrahydrofolate interconversion. Its pathway is amino-acid biosynthesis; glycine biosynthesis; glycine from L-serine: step 1/1. Functionally, catalyzes the reversible interconversion of serine and glycine with tetrahydrofolate (THF) serving as the one-carbon carrier. This reaction serves as the major source of one-carbon groups required for the biosynthesis of purines, thymidylate, methionine, and other important biomolecules. Also exhibits THF-independent aldolase activity toward beta-hydroxyamino acids, producing glycine and aldehydes, via a retro-aldol mechanism. The polypeptide is Serine hydroxymethyltransferase (Yersinia enterocolitica serotype O:8 / biotype 1B (strain NCTC 13174 / 8081)).